The chain runs to 298 residues: N-acetylmuramic acid 6-phosphate etherase (298 aa).

The region spanning 55 to 218 is the SIS domain; that stretch reads IHAQVSGGGR…STGLMIKSGK (164 aa). The active-site Proton donor is the Glu-83. The active site involves Glu-114.

Belongs to the GCKR-like family. MurNAc-6-P etherase subfamily. In terms of assembly, homodimer.

The catalysed reaction is N-acetyl-D-muramate 6-phosphate + H2O = N-acetyl-D-glucosamine 6-phosphate + (R)-lactate. It participates in amino-sugar metabolism; 1,6-anhydro-N-acetylmuramate degradation. The protein operates within amino-sugar metabolism; N-acetylmuramate degradation. Its pathway is cell wall biogenesis; peptidoglycan recycling. In terms of biological role, specifically catalyzes the cleavage of the D-lactyl ether substituent of MurNAc 6-phosphate, producing GlcNAc 6-phosphate and D-lactate. Together with AnmK, is also required for the utilization of anhydro-N-acetylmuramic acid (anhMurNAc) either imported from the medium or derived from its own cell wall murein, and thus plays a role in cell wall recycling. This is N-acetylmuramic acid 6-phosphate etherase from Shigella flexneri serotype 5b (strain 8401).